The primary structure comprises 499 residues: Importin subunit alpha-8 (499 aa).

In terms of domain architecture, IBB spans 1–57 (MATSKAPKERLKNYKYRGKEMSLPRQQRIASSLQLRKTRKDEQVLKRRNIDLFSSDM). ARM repeat units lie at residues 101 to 141 (TPPL…NIAS), 144 to 183 (SEQT…NIAG), 186 to 226 (AEFR…NLCR), 229 to 268 (DPYP…YLTK), 271 to 310 (KEYI…NIVA), 313 to 352 (DEQT…NVAA), 354 to 393 (PRHQ…NIAT), and 397 to 436 (QDQL…YLLQ).

It belongs to the importin alpha family. Binds to importin subunit beta-1/KPNB1 via the IBB domain; this complex dissociates in the presence of RAN-GTP. Shows a limited binding to the RB1 nuclear localization signal (NLS), but not to the SV40, nor NPM1 NLSs. Interacts with RSL1D1. Expressed predominantly in ovary. Isoform 1 is the predominant form.

It localises to the nucleus. Functionally, functions in nuclear protein import. The chain is Importin subunit alpha-8 (Kpna7) from Mus musculus (Mouse).